Consider the following 382-residue polypeptide: Ribonuclease D (382 aa).

Positions 4 to 169 constitute a 3'-5' exonuclease domain; the sequence is ITTTAELASV…DVFAALDADL (166 aa). Residues 208–289 form the HRDC domain; it reads KPKDLAVMME…QRGLARDPRE (82 aa).

This sequence belongs to the RNase D family. Requires a divalent metal cation as cofactor.

It localises to the cytoplasm. It carries out the reaction Exonucleolytic cleavage that removes extra residues from the 3'-terminus of tRNA to produce 5'-mononucleotides.. Its function is as follows. Exonuclease involved in the 3' processing of various precursor tRNAs. Initiates hydrolysis at the 3'-terminus of an RNA molecule and releases 5'-mononucleotides. The chain is Ribonuclease D from Nitrobacter hamburgensis (strain DSM 10229 / NCIMB 13809 / X14).